The following is a 623-amino-acid chain: MGDLPGSGSTAQPRDAAVTGTGGNSTAGGGSSVGSTAVDRPPSPARLSHTSEKHPKVTLTELNMLRRHRELCDVVLNVGGRKIFAHRVILSACSSYFCAMFTGELEESRQTEVTIRDIDENAMELLIDFCYTAHIIVEESNVQTLLPAACLLQLVEIQDICCEFLKRQLDPTNCLGIRAFADTHSCRELLRIADKFTQHNFQEVMESEEFLLLPVGQLVDIICSDELNVRSEEQVFNAVMSWLKYNVAERRQHLAQVLQHVRLPLLSPKFLVGTVGSDLLVRSDEACRDLVDEAKNYLLLPQERPLMQGPRTRPRKPTRRGEVLFAVGGWCSGDAIASVERFDPQTNDWKMVAPMSKRRCGVGVAVLNDLLYAVGGHDGQSYLNSIERYDPQTNQWSCDVAPTTSCRTSVGVAVLDEFLYAVGGQDGVQCLNHVERYDPKENKWSKVAPMTTRRLGVAVAVLGGFLYAIGGSDGQCPLNTVERYDPRHNKWVAVSPMSTRRKHLGCAVFNNYIYAVGGRDDCMELSSAERYNPLTNTWSPIVAMTSRRSGVGLAVVNGQLYAVGGFDGSAYLKTIEVYDPETNQWRLCGCMNYRRLGGGVGVMRAPQTENYMWCENSFKQPNS.

Residues 1 to 54 are disordered; the sequence is MGDLPGSGSTAQPRDAAVTGTGGNSTAGGGSSVGSTAVDRPPSPARLSHTSEKH. T19 is modified (phosphothreonine). Residues 20–32 are compositionally biased toward gly residues; that stretch reads GTGGNSTAGGGSS. Residues 72 to 139 enclose the BTB domain; that stretch reads CDVVLNVGGR…CYTAHIIVEE (68 aa). Residues 174-276 form the BACK domain; sequence CLGIRAFADT…SPKFLVGTVG (103 aa). Kelch repeat units follow at residues 323 to 369, 371 to 417, 418 to 464, 466 to 511, 513 to 558, and 559 to 605; these read VLFA…VLND, LYAV…VLDE, FLYA…VLGG, LYAI…VFNN, IYAV…VVNG, and QLYA…VMRA.

It functions in the pathway protein modification; protein ubiquitination. Its function is as follows. Probable substrate-specific adapter of an E3 ubiquitin-protein ligase complex which mediates the ubiquitination and subsequent proteasomal degradation of target proteins. May have a role in synapse differentiation and growth. The polypeptide is Kelch-like protein diablo (Drosophila simulans (Fruit fly)).